Here is an 861-residue protein sequence, read N- to C-terminus: E3 ubiquitin-protein ligase SH3RF1 (861 aa).

The RING-type zinc-finger motif lies at 12-53 (CPVCLERLDASAKVLPCQHTFCKRCLLGIVSSRNELRCPECR). 2 consecutive SH3 domains span residues 132–191 (PQLP…IIKP) and 194–257 (QPPP…FNSA). The interval 268–319 (SGVDTGEGSSGTTHSSNSQKQADAKKNTKKRHSFTSLTMSNKSSQSVQNRHS) is disordered. The segment covering 273-285 (GEGSSGTTHSSNS) has biased composition (low complexity). Polar residues predominate over residues 301 to 317 (FTSLTMSNKSSQSVQNR). In terms of domain architecture, SH3 3 spans 435-496 (TRPSVFVAIY…PGNYVAPVTR (62 aa)). A disordered region spans residues 684 to 731 (NSAANKQDKDSKKEKKGLLKLLSGASTKRKPRSSPPHSPTQELEQTNS). Positions 689 to 700 (KQDKDSKKEKKG) are enriched in basic and acidic residues. The 60-residue stretch at 802–861 (RPCERYRVVVSYPPQSEAELELKEGDIVFVHKKREDGWFKGTLQRNGKTGLFPGSFVENI) folds into the SH3 4 domain.

This sequence belongs to the SH3RF family. Post-translationally, autoubiquitinated. Ubiquitinated by SH3RF2, leading to proteasome-mediated degradation.

The protein resides in the cytoplasm. It is found in the perinuclear region. It localises to the cell projection. Its subcellular location is the lamellipodium. The protein localises to the golgi apparatus. The protein resides in the trans-Golgi network. It carries out the reaction S-ubiquitinyl-[E2 ubiquitin-conjugating enzyme]-L-cysteine + [acceptor protein]-L-lysine = [E2 ubiquitin-conjugating enzyme]-L-cysteine + N(6)-ubiquitinyl-[acceptor protein]-L-lysine.. Its pathway is protein modification; protein ubiquitination. Has E3 ubiquitin-protein ligase activity. In the absence of an external substrate, it can catalyze self-ubiquitination. Acts as a scaffold protein that contributes to the effective activation of the JNK signaling pathway. The chain is E3 ubiquitin-protein ligase SH3RF1 (sh3rf1) from Xenopus tropicalis (Western clawed frog).